The primary structure comprises 269 residues: Flagellar brake protein YcgR (269 aa).

The PilZ domain occupies 134-254 (QRRNFYRVTT…SRLLIQRYIT (121 aa)).

It belongs to the YcgR family. In terms of assembly, monomer. Interacts with the flagellar basal bodies.

The protein localises to the bacterial flagellum basal body. In terms of biological role, acts as a flagellar brake, regulating swimming and swarming in a bis-(3'-5') cyclic diguanylic acid (c-di-GMP)-dependent manner. Binds 1 c-di-GMP dimer per subunit. Increasing levels of c-di-GMP lead to decreased motility. This chain is Flagellar brake protein YcgR, found in Nitrosomonas eutropha (strain DSM 101675 / C91 / Nm57).